The primary structure comprises 99 residues: NADH dehydrogenase [ubiquinone] 1 alpha subcomplex subunit 2 (99 aa).

Position 2 is an N-acetylalanine (A2). A disulfide bridge links C24 with C58. K64 is subject to N6-acetyllysine; alternate. K64 is subject to N6-succinyllysine; alternate.

The protein belongs to the complex I NDUFA2 subunit family. In terms of assembly, complex I is composed of 45 different subunits.

The protein localises to the mitochondrion inner membrane. Functionally, accessory subunit of the mitochondrial membrane respiratory chain NADH dehydrogenase (Complex I), that is believed not to be involved in catalysis. Complex I functions in the transfer of electrons from NADH to the respiratory chain. The immediate electron acceptor for the enzyme is believed to be ubiquinone. In Gorilla gorilla gorilla (Western lowland gorilla), this protein is NADH dehydrogenase [ubiquinone] 1 alpha subcomplex subunit 2 (NDUFA2).